The sequence spans 211 residues: Probable metallo-hydrolase YqgX (211 aa).

Positions 54, 56, 58, 59, 130, 149, and 190 each coordinate Zn(2+).

This sequence belongs to the metallo-beta-lactamase superfamily. Glyoxalase II family. Zn(2+) serves as cofactor.

The sequence is that of Probable metallo-hydrolase YqgX (yqgX) from Bacillus subtilis (strain 168).